A 352-amino-acid polypeptide reads, in one-letter code: N-acetyl-gamma-glutamyl-phosphate reductase (352 aa).

Cys-155 is a catalytic residue.

This sequence belongs to the NAGSA dehydrogenase family. Type 1 subfamily.

It is found in the cytoplasm. It carries out the reaction N-acetyl-L-glutamate 5-semialdehyde + phosphate + NADP(+) = N-acetyl-L-glutamyl 5-phosphate + NADPH + H(+). Its pathway is amino-acid biosynthesis; L-arginine biosynthesis; N(2)-acetyl-L-ornithine from L-glutamate: step 3/4. Catalyzes the NADPH-dependent reduction of N-acetyl-5-glutamyl phosphate to yield N-acetyl-L-glutamate 5-semialdehyde. This is N-acetyl-gamma-glutamyl-phosphate reductase from Picosynechococcus sp. (strain ATCC 27264 / PCC 7002 / PR-6) (Agmenellum quadruplicatum).